The sequence spans 547 residues: Chaperonin GroEL 1 (547 aa).

ATP contacts are provided by residues 30–33, lysine 51, 87–91, glycine 415, and aspartate 496; these read TLGP and DGTTT.

Belongs to the chaperonin (HSP60) family. As to quaternary structure, forms a cylinder of 14 subunits composed of two heptameric rings stacked back-to-back. Interacts with the co-chaperonin GroES.

It localises to the cytoplasm. The enzyme catalyses ATP + H2O + a folded polypeptide = ADP + phosphate + an unfolded polypeptide.. Functionally, together with its co-chaperonin GroES, plays an essential role in assisting protein folding. The GroEL-GroES system forms a nano-cage that allows encapsulation of the non-native substrate proteins and provides a physical environment optimized to promote and accelerate protein folding. The chain is Chaperonin GroEL 1 from Rhodopseudomonas palustris (strain ATCC BAA-98 / CGA009).